The primary structure comprises 276 residues: Putative pyridoxine kinase (276 aa).

Asn139 serves as a coordination point for ATP. Glu142 is a Mg(2+) binding site. Residues Lys176–Ala180, Asp188, Gly213, and Lys238 contribute to the ATP site.

The protein belongs to the ThiD family.

It carries out the reaction pyridoxal + ATP = pyridoxal 5'-phosphate + ADP + H(+). Phosphorylates B6 vitamers; functions in a salvage pathway. Uses pyridoxal, pyridoxine, and pyridoxamine as substrates. The sequence is that of Putative pyridoxine kinase (pdxK) from Staphylococcus aureus (strain COL).